Consider the following 197-residue polypeptide: uncharacterized protein (197 aa).

This is an uncharacterized protein from Caenorhabditis elegans.